Consider the following 124-residue polypeptide: Fluoride-specific ion channel FluC 2 (124 aa).

Helical transmembrane passes span 9–29 (LGIFLAAMLGGLVRYLVSTWL), 34–54 (DFPWGTLFVNYLGIFCLIFLV), 67–87 (LILALGTGFCGGLTTFSSLML), and 99–119 (FSLVLYLLLSIGGGLLLAYFL). 2 residues coordinate Na(+): G77 and T80.

It belongs to the fluoride channel Fluc/FEX (TC 1.A.43) family.

It localises to the cell membrane. It carries out the reaction fluoride(in) = fluoride(out). With respect to regulation, na(+) is not transported, but it plays an essential structural role and its presence is essential for fluoride channel function. Its function is as follows. Fluoride-specific ion channel. Important for reducing fluoride concentration in the cell, thus reducing its toxicity. The chain is Fluoride-specific ion channel FluC 2 from Streptococcus pneumoniae (strain ATCC BAA-255 / R6).